The chain runs to 221 residues: MCPLRSLLLISTLVLLHHLPHLSLGRSLPTTTAGPGTSCLDYSQNLLRAVSNTLQKARQTLEFYSCTSEEIDHEDITKDKTSTVEACLPLELATNESCLASRETSLITNGHCLSSGKTSFMTTLCLRSIYKDLKMYHMEFQAMNAKLLMDPKRQVFLDQNMLAAIAELMQALNFDSETVPQKPSLEELDFYKTKVKLCILLHAFRIRAVTIDRMMSYLSSS.

Residues 1–25 form the signal peptide; the sequence is MCPLRSLLLISTLVLLHHLPHLSLG. Cystine bridges form between cysteine 39–cysteine 112, cysteine 66–cysteine 198, and cysteine 87–cysteine 125. Asparagine 95 is a glycosylation site (N-linked (GlcNAc...) asparagine).

Belongs to the IL-6 superfamily. Heterodimer with IL12B; disulfide-linked. This heterodimer is known as interleukin IL-12. Heterodimer with EBI3/IL27B; not disulfide-linked. This heterodimer is known as interleukin IL-35. Interacts with NBR1; this interaction promotes IL-12 secretion.

The protein resides in the secreted. Functionally, heterodimerizes with IL12B to form the IL-12 cytokine or with EBI3/IL27B to form the IL-35 cytokine. IL-12 is primarily produced by professional antigen-presenting cells (APCs) such as B-cells and dendritic cells (DCs) as well as macrophages and granulocytes and regulates T-cell and natural killer-cell responses, induces the production of interferon-gamma (IFN-gamma), favors the differentiation of T-helper 1 (Th1) cells and is an important link between innate resistance and adaptive immunity. Mechanistically, exerts its biological effects through a receptor composed of IL12R1 and IL12R2 subunits. Binding to the receptor results in the rapid tyrosine phosphorylation of a number of cellular substrates including the JAK family kinases TYK2 and JAK2. In turn, recruited STAT4 gets phosphorylated and translocates to the nucleus where it regulates cytokine/growth factor responsive genes. As part of IL-35, plays essential roles in maintaining the immune homeostasis of the liver microenvironment and also functions as an immune-suppressive cytokine. Mediates biological events through unconventional receptors composed of IL12RB2 and gp130/IL6ST heterodimers or homodimers. Signaling requires the transcription factors STAT1 and STAT4, which form a unique heterodimer that binds to distinct DNA sites. The chain is Interleukin-12 subunit alpha (IL12A) from Ovis aries (Sheep).